The sequence spans 354 residues: NADH-quinone oxidoreductase subunit H (354 aa).

8 helical membrane passes run 25–45 (LVRILVVAVVILLCVAYLILW), 91–111 (WLYLVAPVMTVVPAFAVWAVI), 126–146 (LLYAMAISSIGVYAVILAGWA), 170–190 (MGFALVLVLMTAGSLNLSEIV), 205–225 (FLSWNWLPLLPVFVIYFISGI), 253–273 (MAFALFFLAEYINMIVISALA), 290–310 (FIPGIFWLVLKIFALLSVFIW), and 330–350 (VFLPVCVFWVIVVGFWMMSPL).

This sequence belongs to the complex I subunit 1 family. As to quaternary structure, NDH-1 is composed of 14 different subunits. Subunits NuoA, H, J, K, L, M, N constitute the membrane sector of the complex.

It is found in the cell inner membrane. It catalyses the reaction a quinone + NADH + 5 H(+)(in) = a quinol + NAD(+) + 4 H(+)(out). NDH-1 shuttles electrons from NADH, via FMN and iron-sulfur (Fe-S) centers, to quinones in the respiratory chain. The immediate electron acceptor for the enzyme in this species is believed to be ubiquinone. Couples the redox reaction to proton translocation (for every two electrons transferred, four hydrogen ions are translocated across the cytoplasmic membrane), and thus conserves the redox energy in a proton gradient. This subunit may bind ubiquinone. This Burkholderia mallei (strain ATCC 23344) protein is NADH-quinone oxidoreductase subunit H.